Reading from the N-terminus, the 194-residue chain is MIPAIIGTRPNNSIALHKSGIRLLGVDDSPFRRGQQKSFIVGVIMRLDGYIEKVMKAQITIDGNDVTERISNMALKFKDIVRVIVLSGISFGGFNICDIELLFKLTGIPVISLFEKGGSASEMINAINKHLGDQEKIGILKRLKPIALNNNGYTIMANLAGIESESASRIIRMNTVRGKMPEAVRVPDLIAKIL.

This sequence belongs to the UPF0215 family.

In Thermoplasma volcanium (strain ATCC 51530 / DSM 4299 / JCM 9571 / NBRC 15438 / GSS1), this protein is UPF0215 protein TV0037.